The following is a 710-amino-acid chain: Solute carrier family 15 member 1 (710 aa).

A helical transmembrane segment spans residues 1–21 (MGMSKSRGCFGYPLSIFFIVV). Residues 22–53 (NEFCERFSYYGMRALLVLYFRNFLGWDDDLST) lie on the Extracellular side of the membrane. A helical transmembrane segment spans residues 54–74 (AIYHTFVALCYLTPILGALIA). At 75–82 (DSWLGKFK) the chain is on the cytoplasmic side. A helical membrane pass occupies residues 83-103 (TIVSLSIVYTIGQAVISVSSI). Residues 104 to 118 (NDLTDHDHDGSPNNL) lie on the Extracellular side of the membrane. Residues 119–139 (PLHVALSMIGLALIALGTGGI) form a helical membrane-spanning segment. Residues 140-161 (KPCVSAFGGDQFEEGQEKQRNR) lie on the Cytoplasmic side of the membrane. The chain crosses the membrane as a helical span at residues 162-182 (FFSIFYLAINAGSLLSTIITP). At 183–198 (ILRVQQCGIHSQQACY) the chain is on the extracellular side. Residues 199–219 (PLAFGVPAALMAVALIVFVLG) form a helical membrane-spanning segment. Topologically, residues 220–276 (SGMYKKFQPQGNIMGKVAKCIRFAIKNRFRHRSKAFPKRNHWLDWAKEKYDERLISQ) are cytoplasmic. The helical transmembrane segment at 277 to 297 (IKIMTKVMFLYIPLPMFWALF) threads the bilayer. The Extracellular segment spans residues 298 to 327 (DQQGSRWTLQATTMTGKIGTIEIQPDQMQT). The chain crosses the membrane as a helical span at residues 328-348 (VNAILIVIMVPIVDAVVYPLI). Residues 349 to 361 (AKCGFNFTSLKKM) are Cytoplasmic-facing. A helical membrane pass occupies residues 362 to 382 (TVGMFLASMAFVVAAIVQVEI). Topologically, residues 383–586 (DKTLPVFPSG…PPNTVNMALQ (204 aa)) are extracellular. The tract at residues 383–586 (DKTLPVFPSG…PPNTVNMALQ (204 aa)) is extracellular domain (ECD). N-linked (GlcNAc...) asparagine glycans are attached at residues Asn415, Asn439, Asn510, Asn532, and Asn539. The helical transmembrane segment at 587–607 (IPQYFLLTCGEVVFSVTGLEF) threads the bilayer. Residues 608–621 (SYSQAPSNMKSVLQ) are Cytoplasmic-facing. A helical transmembrane segment spans residues 622–642 (AGWLLTVAIGNIIVLIVAEAG). The Extracellular portion of the chain corresponds to 643-647 (HFDKQ). A helical transmembrane segment spans residues 648–668 (WAEYVLFASLLLVVCIIFAIM). At 669 to 710 (ARFYTYINPAEIEAQFDEDEKKKGVGKENPYSSLEPVSQTNM) the chain is on the cytoplasmic side. The segment at 687–710 (DEKKKGVGKENPYSSLEPVSQTNM) is disordered. Polar residues predominate over residues 698 to 710 (PYSSLEPVSQTNM).

This sequence belongs to the major facilitator superfamily. Proton-dependent oligopeptide transporter (POT/PTR) (TC 2.A.17) family. In terms of assembly, interacts (via extracellular domain region) with trypsin. In terms of tissue distribution, highly expressed in small intestine. Expression is restricted to pinealocytes.

The protein resides in the apical cell membrane. The catalysed reaction is a dipeptide(out) + H(+)(out) = a dipeptide(in) + H(+)(in). The enzyme catalyses an L-amino acid tripeptide(out) + H(+)(out) = an L-amino acid tripeptide(in) + H(+)(in). It catalyses the reaction L-alanyl-L-lysine(out) + H(+)(out) = L-alanyl-L-lysine(in) + H(+)(in). It carries out the reaction L-alanyl-L-proline(out) + H(+)(out) = L-alanyl-L-proline(in) + H(+)(in). The catalysed reaction is L-alanyl-L-valine(out) + H(+)(out) = L-alanyl-L-valine(in) + H(+)(in). The enzyme catalyses carnosine(out) + H(+)(out) = carnosine(in) + H(+)(in). It catalyses the reaction glycyl-L-glutamine(out) + H(+)(out) = glycyl-L-glutamine(in) + H(+)(in). It carries out the reaction glycyl-L-leucine(out) + H(+)(out) = glycyl-L-leucine(in) + H(+)(in). The catalysed reaction is glycyl-L-proline(out) + H(+)(out) = glycyl-L-proline(in) + H(+)(in). The enzyme catalyses glycyl-sarcosine(out) + H(+)(out) = glycyl-sarcosine(in) + H(+)(in). It catalyses the reaction L-leucyl-L-leucine(out) + H(+)(out) = L-leucyl-L-leucine(in) + H(+)(in). It carries out the reaction L-leucyl-L-proline(out) + H(+)(out) = L-leucyl-L-proline(in) + H(+)(in). The catalysed reaction is L-phenylalanyl-L-leucine(out) + H(+)(out) = L-phenylalanyl-L-leucine(in) + H(+)(in). The enzyme catalyses L-phenylalanyl-L-phenylalanine(out) + H(+)(out) = L-phenylalanyl-L-phenylalanine(in) + H(+)(in). It catalyses the reaction L-lysyl-glycine(out) + H(+)(out) = L-lysyl-glycine(in) + H(+)(in). It carries out the reaction L-tyrosylglycine(out) + H(+)(out) = L-tyrosylglycine(in) + H(+)(in). The catalysed reaction is L-alanyl-L-aspartate(out) + 2 H(+)(out) = L-alanyl-L-aspartate(in) + 2 H(+)(in). The enzyme catalyses L-aspartyl-glycine(out) + 2 H(+)(out) = L-aspartyl-glycine(in) + 2 H(+)(in). It catalyses the reaction glycyl-L-aspartate(out) + 2 H(+)(out) = glycyl-L-aspartate(in) + 2 H(+)(in). It carries out the reaction glycyl-L-glutamate(out) + 2 H(+)(out) = glycyl-L-glutamate(in) + 2 H(+)(in). The catalysed reaction is L-alanyl-L-leucyl-L-alanine(out) + H(+)(out) = L-alanyl-L-leucyl-L-alanine(in) + H(+)(in). The enzyme catalyses L-alanyl-L-prolylglycine(out) + H(+)(out) = L-alanyl-L-prolylglycine(in) + H(+)(in). It catalyses the reaction glycylglycyl-L-isoleucine(out) + H(+)(out) = glycylglycyl-L-isoleucine(in) + H(+)(in). It carries out the reaction glycylglycyl-L-proline(out) + H(+)(out) = glycylglycyl-L-proline(in) + H(+)(in). The catalysed reaction is L-methionyl-L-phenylalanyl-L-methionine(out) + H(+)(out) = L-methionyl-L-phenylalanyl-L-methionine(in) + H(+)(in). The enzyme catalyses N-acetyl-D-muramoyl-L-alanyl-D-isoglutamine(out) + 2 H(+)(out) = N-acetyl-D-muramoyl-L-alanyl-D-isoglutamine(in) + 2 H(+)(in). It catalyses the reaction N(alpha)-formyl-L-methionyl-L-leucyl-L-phenylalanine(out) + 2 H(+)(out) = N(alpha)-formyl-L-methionyl-L-leucyl-L-phenylalanine(in) + 2 H(+)(in). Electrogenic proton-coupled amino-acid transporter that transports oligopeptides of 2 to 4 amino acids with a preference for dipeptides. Transports neutral and monovalently charged peptides with a proton to peptide stoichiometry of 1:1 or 2:1. Primarily responsible for the absorption of dietary di- and tripeptides from the small intestinal lumen. Mediates transepithelial transport of muramyl and N-formylated bacterial dipeptides contributing to recognition of pathogenic bacteria by the mucosal immune system. The polypeptide is Solute carrier family 15 member 1 (Slc15a1) (Rattus norvegicus (Rat)).